The chain runs to 184 residues: NADH-quinone oxidoreductase subunit B (184 aa).

Positions 63, 64, 128, and 158 each coordinate [4Fe-4S] cluster.

It belongs to the complex I 20 kDa subunit family. As to quaternary structure, NDH-1 is composed of 14 different subunits. Subunits NuoB, C, D, E, F, and G constitute the peripheral sector of the complex. Requires [4Fe-4S] cluster as cofactor.

The protein resides in the cell inner membrane. It catalyses the reaction a quinone + NADH + 5 H(+)(in) = a quinol + NAD(+) + 4 H(+)(out). Its function is as follows. NDH-1 shuttles electrons from NADH, via FMN and iron-sulfur (Fe-S) centers, to quinones in the respiratory chain. The immediate electron acceptor for the enzyme in this species is believed to be ubiquinone. Couples the redox reaction to proton translocation (for every two electrons transferred, four hydrogen ions are translocated across the cytoplasmic membrane), and thus conserves the redox energy in a proton gradient. This Xanthomonas oryzae pv. oryzae (strain MAFF 311018) protein is NADH-quinone oxidoreductase subunit B.